A 398-amino-acid chain; its full sequence is S-adenosylmethionine synthase (398 aa).

The interval 1 to 21 (MAANRRLFTSESVTEGHPDKM) is disordered. Histidine 17 contacts ATP. Aspartate 19 lines the Mg(2+) pocket. Glutamate 45 is a K(+) binding site. 2 residues coordinate L-methionine: glutamate 58 and glutamine 101. The tract at residues 101 to 111 (QSADIAGGVNQ) is flexible loop. ATP contacts are provided by residues 177 to 179 (DGK), 244 to 245 (RF), aspartate 253, 259 to 260 (RK), alanine 276, and lysine 280. Position 253 (aspartate 253) interacts with L-methionine. Lysine 284 provides a ligand contact to L-methionine.

It belongs to the AdoMet synthase family. As to quaternary structure, homotetramer; dimer of dimers. Mg(2+) serves as cofactor. Requires K(+) as cofactor.

Its subcellular location is the cytoplasm. The catalysed reaction is L-methionine + ATP + H2O = S-adenosyl-L-methionine + phosphate + diphosphate. The protein operates within amino-acid biosynthesis; S-adenosyl-L-methionine biosynthesis; S-adenosyl-L-methionine from L-methionine: step 1/1. Functionally, catalyzes the formation of S-adenosylmethionine (AdoMet) from methionine and ATP. The overall synthetic reaction is composed of two sequential steps, AdoMet formation and the subsequent tripolyphosphate hydrolysis which occurs prior to release of AdoMet from the enzyme. The sequence is that of S-adenosylmethionine synthase from Oceanobacillus iheyensis (strain DSM 14371 / CIP 107618 / JCM 11309 / KCTC 3954 / HTE831).